Reading from the N-terminus, the 302-residue chain is 33 kDa chaperonin (302 aa).

2 disulfides stabilise this stretch: cysteine 234-cysteine 236 and cysteine 267-cysteine 270.

This sequence belongs to the HSP33 family. Under oxidizing conditions two disulfide bonds are formed involving the reactive cysteines. Under reducing conditions zinc is bound to the reactive cysteines and the protein is inactive.

The protein resides in the cytoplasm. Redox regulated molecular chaperone. Protects both thermally unfolding and oxidatively damaged proteins from irreversible aggregation. Plays an important role in the bacterial defense system toward oxidative stress. This chain is 33 kDa chaperonin, found in Neisseria gonorrhoeae (strain ATCC 700825 / FA 1090).